Reading from the N-terminus, the 280-residue chain is Energy-coupling factor transporter ATP-binding protein EcfA (280 aa).

The region spanning 5–240 is the ABC transporter domain; that stretch reads IDVKNLTYKY…DEMLKLTGLE (236 aa). 40-47 provides a ligand contact to ATP; sequence GHNGSGKS.

This sequence belongs to the ABC transporter superfamily. Energy-coupling factor EcfA family. In terms of assembly, forms a stable energy-coupling factor (ECF) transporter complex composed of 2 membrane-embedded substrate-binding proteins (S component), 2 ATP-binding proteins (A component) and 2 transmembrane proteins (T component).

It is found in the cell membrane. Its function is as follows. ATP-binding (A) component of a common energy-coupling factor (ECF) ABC-transporter complex. Unlike classic ABC transporters this ECF transporter provides the energy necessary to transport a number of different substrates. This Pediococcus pentosaceus (strain ATCC 25745 / CCUG 21536 / LMG 10740 / 183-1w) protein is Energy-coupling factor transporter ATP-binding protein EcfA.